The following is a 134-amino-acid chain: Small ribosomal subunit protein uS11 (134 aa).

Residues 115 to 134 are disordered; it reads VTPIPTDSTRRKGGRRGRRL. Residues 125 to 134 are compositionally biased toward basic residues; that stretch reads RKGGRRGRRL.

The protein belongs to the universal ribosomal protein uS11 family.

This Syntrichia ruralis (Great hairy screw-moss) protein is Small ribosomal subunit protein uS11 (RPS14).